A 497-amino-acid polypeptide reads, in one-letter code: Glycerol kinase (497 aa).

An ADP-binding site is contributed by threonine 11. Residues threonine 11, serine 12, and serine 13 each contribute to the ATP site. Threonine 11 contacts sn-glycerol 3-phosphate. ADP is bound at residue arginine 15. 4 residues coordinate sn-glycerol 3-phosphate: arginine 81, glutamate 82, tyrosine 133, and aspartate 242. Arginine 81, glutamate 82, tyrosine 133, aspartate 242, and glutamine 243 together coordinate glycerol. 2 residues coordinate ADP: threonine 264 and glycine 307. ATP contacts are provided by threonine 264, glycine 307, glutamine 311, and glycine 412. ADP is bound by residues glycine 412 and asparagine 416.

This sequence belongs to the FGGY kinase family.

The enzyme catalyses glycerol + ATP = sn-glycerol 3-phosphate + ADP + H(+). It participates in polyol metabolism; glycerol degradation via glycerol kinase pathway; sn-glycerol 3-phosphate from glycerol: step 1/1. With respect to regulation, inhibited by fructose 1,6-bisphosphate (FBP). Its function is as follows. Key enzyme in the regulation of glycerol uptake and metabolism. Catalyzes the phosphorylation of glycerol to yield sn-glycerol 3-phosphate. The chain is Glycerol kinase from Polaromonas naphthalenivorans (strain CJ2).